We begin with the raw amino-acid sequence, 284 residues long: Pantothenate synthetase (284 aa).

30 to 37 (MGNLHEGH) provides a ligand contact to ATP. His-37 serves as the catalytic Proton donor. Residue Gln-61 coordinates (R)-pantoate. Gln-61 serves as a coordination point for beta-alanine. 149–152 (GEKD) lines the ATP pocket. Gln-155 lines the (R)-pantoate pocket. Residues Val-178 and 186–189 (LSSR) each bind ATP.

The protein belongs to the pantothenate synthetase family. As to quaternary structure, homodimer.

It localises to the cytoplasm. The catalysed reaction is (R)-pantoate + beta-alanine + ATP = (R)-pantothenate + AMP + diphosphate + H(+). The protein operates within cofactor biosynthesis; (R)-pantothenate biosynthesis; (R)-pantothenate from (R)-pantoate and beta-alanine: step 1/1. In terms of biological role, catalyzes the condensation of pantoate with beta-alanine in an ATP-dependent reaction via a pantoyl-adenylate intermediate. The chain is Pantothenate synthetase from Yersinia pestis bv. Antiqua (strain Antiqua).